The chain runs to 761 residues: 3'-5' RNA nuclease TATDN2 (761 aa).

Disordered regions lie at residues 1-90 (MASE…HFLG), 135-181 (CSLK…LRDQ), 197-294 (KSMP…RRTV), 318-337 (KDRE…SDVE), 343-364 (RFSQ…SSFT), and 388-486 (SSPK…PKSH). 2 stretches are compositionally biased toward low complexity: residues 33–52 (APSS…PSSP) and 66–85 (SRRL…SSFS). Basic and acidic residues predominate over residues 247–294 (QKEKDATPEVSMEEDKTVPERSSFYDRRVVIDPQEKPSEEPLGDRRTV). Low complexity predominate over residues 388–402 (SSPKPSSYPSTGSSS). The span at 417–431 (SDYSPNSTGSVQNTS) shows a compositional bias: polar residues. Positions 452–470 (RSSEEREVKEKRTFQEEMP) are enriched in basic and acidic residues. 6 residues coordinate a divalent metal cation: His499, His501, Glu593, His630, His655, and Asp707.

It belongs to the metallo-dependent hydrolases superfamily. TatD-type hydrolase family. It depends on Mg(2+) as a cofactor.

It is found in the nucleus. Mg(2+)-dependent 3'RNA exonuclease and endonuclease that resolves R-loops via specific degradation of R-loop RNA stucture. Shows no activity against D-loop and minimal activity against the RNA strand of an RNA-DNA hybrid duplex oligomer. Has no 3' or 5' exonuclease activity, no uracil glycosylase activity, and no 5' flap endonuclease activity on DNA substrates. May have a role in maintaining genomic stability through its role in R-loop resolution. The sequence is that of 3'-5' RNA nuclease TATDN2 (TATDN2) from Homo sapiens (Human).